The sequence spans 512 residues: 2-isopropylmalate synthase (512 aa).

The 264-residue stretch at 5–268 (LIIFDTTLRD…ELGIDTQHIV (264 aa)) folds into the Pyruvate carboxyltransferase domain. Residues Asp-14, His-202, His-204, and Asn-239 each contribute to the Mn(2+) site. The segment at 394 to 512 (GFVSLSQRSE…SKAERVAAQG (119 aa)) is regulatory domain.

This sequence belongs to the alpha-IPM synthase/homocitrate synthase family. LeuA type 1 subfamily. In terms of assembly, homodimer. It depends on Mn(2+) as a cofactor.

Its subcellular location is the cytoplasm. It catalyses the reaction 3-methyl-2-oxobutanoate + acetyl-CoA + H2O = (2S)-2-isopropylmalate + CoA + H(+). It participates in amino-acid biosynthesis; L-leucine biosynthesis; L-leucine from 3-methyl-2-oxobutanoate: step 1/4. Functionally, catalyzes the condensation of the acetyl group of acetyl-CoA with 3-methyl-2-oxobutanoate (2-ketoisovalerate) to form 3-carboxy-3-hydroxy-4-methylpentanoate (2-isopropylmalate). The polypeptide is 2-isopropylmalate synthase (Paracidovorax citrulli (strain AAC00-1) (Acidovorax citrulli)).